An 865-amino-acid polypeptide reads, in one-letter code: Taste receptor type 1 member 3 (865 aa).

The signal sequence occupies residues 1 to 24 (MPGLALLGLTALLGLTALLDHGEG). Residues 25-573 (ATSCLSQQLR…FLAWGEPAVL (549 aa)) are Extracellular-facing. Asn-134 and Asn-267 each carry an N-linked (GlcNAc...) asparagine glycan. Residues 574–594 (LLLALLALALGLALAALGLFL) traverse the membrane as a helical segment. At 595-606 (WHSDSPLVQASG) the chain is on the cytoplasmic side. A helical transmembrane segment spans residues 607–627 (GPRACFGLACLGLVCLSVLLF). Residues 628 to 642 (PGQPGPASCLAQQPL) lie on the Extracellular side of the membrane. The helical transmembrane segment at 643–663 (FHLPLTGCLSTFFLQAAEIFV) threads the bilayer. Residues 664-685 (GSELPPSWAEKMRGRLRGPWAW) lie on the Cytoplasmic side of the membrane. The chain crosses the membrane as a helical span at residues 686–706 (LVVLLAMLAEAALCAWYLVAF). At 707-732 (PPEVVTDWRVLPTEALVHCHVHSWIS) the chain is on the extracellular side. The chain crosses the membrane as a helical span at residues 733 to 753 (FGLVHATNAMLAFLCFLGTFL). The Cytoplasmic portion of the chain corresponds to 754–765 (VQSRPGRYNGAR). The chain crosses the membrane as a helical span at residues 766–786 (GLTFAMLAYFITWISFVPLFA). Over 787–794 (NVHVAYQP) the chain is Extracellular. Residues 795–815 (AVQMGTILLCALGILATFHLP) traverse the membrane as a helical segment. The Cytoplasmic portion of the chain corresponds to 816–865 (KCYLLLQRPELNTPEFFLEDNARAQGSSWGQGRGESGQKQVTPDPVTSPQ). A disordered region spans residues 840-865 (QGSSWGQGRGESGQKQVTPDPVTSPQ). The span at 852 to 865 (GQKQVTPDPVTSPQ) shows a compositional bias: polar residues.

It belongs to the G-protein coupled receptor 3 family. TAS1R subfamily. In terms of assembly, forms homodimers or a heterodimer with TAS1R1. Expressed in taste buds.

The protein localises to the cell membrane. Functionally, putative taste receptor. TAS1R1/TAS1R3 responds to the umami taste stimulus (the taste of monosodium glutamate). The sequence is that of Taste receptor type 1 member 3 (TAS1R3) from Felis catus (Cat).